The primary structure comprises 342 residues: Succinoglycan biosynthesis protein ExoU (342 aa).

This sequence belongs to the glycosyltransferase 2 family.

The protein resides in the cytoplasm. The protein operates within glycan metabolism; exopolysaccharide biosynthesis. In terms of biological role, glycosyltransferase required for the synthesis of succinoglycan (EPS I). Needed for the addition of the sixth sugar (glucose), catalyzes the formation of a beta-1,6 linkage between the fifth and sixth sugar. The polypeptide is Succinoglycan biosynthesis protein ExoU (exoU) (Rhizobium meliloti (strain 1021) (Ensifer meliloti)).